We begin with the raw amino-acid sequence, 200 residues long: Dephospho-CoA kinase (200 aa).

One can recognise a DPCK domain in the interval 3 to 200; sequence KVGLTGGIGS…EELQRRLHSR (198 aa). 11–16 serves as a coordination point for ATP; that stretch reads GSGKSS.

Belongs to the CoaE family.

The protein resides in the cytoplasm. The catalysed reaction is 3'-dephospho-CoA + ATP = ADP + CoA + H(+). The protein operates within cofactor biosynthesis; coenzyme A biosynthesis; CoA from (R)-pantothenate: step 5/5. Functionally, catalyzes the phosphorylation of the 3'-hydroxyl group of dephosphocoenzyme A to form coenzyme A. The protein is Dephospho-CoA kinase of Thermobifida fusca (strain YX).